A 302-amino-acid polypeptide reads, in one-letter code: Deoxyribonuclease-1-like 1 (302 aa).

The signal sequence occupies residues methionine 1–alanine 18. Residues glutamate 97 and histidine 148 contribute to the active site. Cysteine 187 and cysteine 224 form a disulfide bridge. Asparagine 261 carries an N-linked (GlcNAc...) asparagine glycan.

This sequence belongs to the DNase I family. In terms of tissue distribution, highest levels in skeletal and cardiac muscles. Detectable in all other tissues tested except brain.

It is found in the endoplasmic reticulum. In Homo sapiens (Human), this protein is Deoxyribonuclease-1-like 1 (DNASE1L1).